The chain runs to 194 residues: AP-3 complex subunit sigma (194 aa).

Belongs to the adaptor complexes small subunit family. As to quaternary structure, adaptor protein complex 3 (AP-3) is a heterotetramer composed of 2 large adaptins (APL5 and APL6), a medium adaptin (APM3) and a small adaptin (APS3).

The protein localises to the golgi apparatus. It is found in the cytoplasmic vesicle membrane. Part of the AP-3 complex, an adaptor-related complex which is not clathrin-associated. The complex is associated with the Golgi region as well as more peripheral structures. It facilitates the budding of vesicles from the Golgi membrane and may be directly involved in trafficking to the vacuole. Required for the transport via the ALP pathway, which directs the transport of the cargo proteins PHO8 and VAM3 to the vacuole. The chain is AP-3 complex subunit sigma (APS3) from Saccharomyces cerevisiae (strain ATCC 204508 / S288c) (Baker's yeast).